Here is a 489-residue protein sequence, read N- to C-terminus: Betaine aldehyde dehydrogenase (489 aa).

K(+) is bound by residues Thr-26 and Asp-93. 150 to 152 (GAW) lines the NAD(+) pocket. Lys-162 (charge relay system) is an active-site residue. 176-179 (KPSE) serves as a coordination point for NAD(+). K(+) is bound at residue Val-180. 229 to 232 (GVET) contributes to the NAD(+) binding site. Leu-245 is a binding site for K(+). The Proton acceptor role is filled by Glu-251. NAD(+) is bound by residues Gly-253, Cys-285, and Glu-386. The active-site Nucleophile is Cys-285. Residue Cys-285 is modified to Cysteine sulfenic acid (-SOH). Positions 456 and 459 each coordinate K(+). The Charge relay system role is filled by Glu-463.

It belongs to the aldehyde dehydrogenase family. As to quaternary structure, dimer of dimers. It depends on K(+) as a cofactor.

The enzyme catalyses betaine aldehyde + NAD(+) + H2O = glycine betaine + NADH + 2 H(+). It functions in the pathway amine and polyamine biosynthesis; betaine biosynthesis via choline pathway; betaine from betaine aldehyde: step 1/1. Functionally, involved in the biosynthesis of the osmoprotectant glycine betaine. Catalyzes the irreversible oxidation of betaine aldehyde to the corresponding acid. The sequence is that of Betaine aldehyde dehydrogenase from Paraburkholderia phymatum (strain DSM 17167 / CIP 108236 / LMG 21445 / STM815) (Burkholderia phymatum).